Consider the following 1340-residue polypeptide: Pleckstrin homology domain-containing family G member 2 (1340 aa).

The span at 34–44 (TPTAQAATTMA) shows a compositional bias: polar residues. The interval 34–76 (TPTAQAATTMASPRGSGSSTSLSTVGSEGDPSPACSASRPEPL) is disordered. The segment covering 45–62 (SPRGSGSSTSLSTVGSEG) has biased composition (low complexity). One can recognise a DH domain in the interval 98–279 (RLERVAREIV…TAVAWYINDM (182 aa)). The PH domain maps to 309 to 407 (ELVLEGTFRG…WIHCLQRLFF (99 aa)). Disordered stretches follow at residues 431–623 (PKSK…IPCI), 684–743 (LPGP…SVQG), 820–855 (MQRAETRASTNAPRRRPRVLAQPQPSPCPPQEEAEP), 907–979 (NVSD…PSAG), 991–1028 (TTSLPGQECQADTVALSKQEGHEDSQNPNKAPGAEQRD), 1047–1069 (PVCTSSPDQQIPATTPLPLSTDF), and 1125–1146 (PLSSHKQEDAPECLGPEPSLTD). A Phosphothreonine modification is found at Thr441. Ser446 and Ser465 each carry phosphoserine. A compositionally biased stretch (basic and acidic residues) spans 560-572 (DIPKFPRDSRVPV). A compositionally biased stretch (acidic residues) spans 588–600 (SEEEEEEDLETDE). Polar residues-rich tracts occupy residues 703 to 714 (SGSNPGRLSESP), 820 to 831 (MQRAETRASTNA), 907 to 921 (NVSDLSKQGHLSSNS), 930 to 945 (GQSNFQNIQVPSTSLL), and 956 to 972 (PTASTLPDTSQLQSQVP). The span at 1049-1059 (CTSSPDQQIPA) shows a compositional bias: polar residues. At Thr1215 the chain carries Phosphothreonine. Phosphoserine is present on residues Ser1219 and Ser1269. Residues 1250 to 1340 (RRQGPGGEGT…VGPSQGPGGS (91 aa)) are disordered. Over residues 1276 to 1288 (PSPPPQPQPPAPP) the composition is skewed to pro residues. The segment covering 1319–1333 (HPALLAAPHPGAVGP) has biased composition (low complexity).

Expressed in thymus, skeletal muscle, lung, testis, uterus, pancreas and heart and also expressed during embryogenesis.

Its function is as follows. May be a transforming oncogene with exchange activity for CDC42. May be a guanine-nucleotide exchange factor (GEF) for RAC1 and CDC42. Activated by the binding to subunits beta and gamma of the heterotrimeric guanine nucleotide-binding protein (G protein). Involved in the regulation of actin polymerization. The chain is Pleckstrin homology domain-containing family G member 2 (Plekhg2) from Mus musculus (Mouse).